Consider the following 353-residue polypeptide: AA9 family lytic polysaccharide monooxygenase A (353 aa).

A signal peptide spans 1–19; sequence MKSTFGLLALAAAAKMAHA. Cu(2+) is bound by residues His20 and His102. A disulfide bridge links Cys62 with Cys183. His169 provides a ligand contact to O2. Cu(2+) is bound at residue Tyr180. Positions 266–276 are enriched in low complexity; sequence KPTTTTAAAPA. Residues 266 to 316 form a disordered region; the sequence is KPTTTTAAAPAETDSCDGDDDDYETETPAPQASATQAPAPQRPAPQTPSGS. Positions 279 to 290 are enriched in acidic residues; sequence DSCDGDDDDYET. Over residues 291 to 304 the composition is skewed to low complexity; it reads ETPAPQASATQAPA. The CBM1 domain occupies 315 to 351; the sequence is GSVKEWYQCGGINYTGAKNCESGLVCKEWNPYYHQCI. Asn327 carries N-linked (GlcNAc...) asparagine glycosylation.

The protein belongs to the polysaccharide monooxygenase AA9 family. Cu(2+) is required as a cofactor.

The protein resides in the secreted. It carries out the reaction [(1-&gt;4)-beta-D-glucosyl]n+m + reduced acceptor + O2 = 4-dehydro-beta-D-glucosyl-[(1-&gt;4)-beta-D-glucosyl]n-1 + [(1-&gt;4)-beta-D-glucosyl]m + acceptor + H2O.. In terms of biological role, lytic polysaccharide monooxygenase (LPMO) that depolymerizes crystalline and amorphous polysaccharides via the oxidation of scissile alpha- or beta-(1-4)-glycosidic bonds, yielding C4 oxidation products. Catalysis by LPMOs requires the reduction of the active-site copper from Cu(II) to Cu(I) by a reducing agent and H(2)O(2) or O(2) as a cosubstrate. This chain is AA9 family lytic polysaccharide monooxygenase A (eglD), found in Aspergillus clavatus (strain ATCC 1007 / CBS 513.65 / DSM 816 / NCTC 3887 / NRRL 1 / QM 1276 / 107).